We begin with the raw amino-acid sequence, 152 residues long: Catabolic 3-dehydroquinase (152 aa).

Tyr24 acts as the Proton acceptor in catalysis. Substrate contacts are provided by Asn75, His81, and Asp88. The active-site Proton donor is His101. Residues 102–103 (IS) and Arg112 each bind substrate.

Belongs to the type-II 3-dehydroquinase family. As to quaternary structure, homododecamer. Adopts a ring-like structure, composed of an arrangement of two hexameric rings stacked on top of one another.

It catalyses the reaction 3-dehydroquinate = 3-dehydroshikimate + H2O. The protein operates within aromatic compound metabolism; 3,4-dihydroxybenzoate biosynthesis; 3,4-dihydroxybenzoate from 3-dehydroquinate: step 1/2. Its function is as follows. Is involved in the catabolism of quinate. Allows the utilization of quinate as carbon source via the beta-ketoadipate pathway. This is Catabolic 3-dehydroquinase from Phaeosphaeria nodorum (strain SN15 / ATCC MYA-4574 / FGSC 10173) (Glume blotch fungus).